Here is a 137-residue protein sequence, read N- to C-terminus: Large ribosomal subunit protein uL16 (137 aa).

It belongs to the universal ribosomal protein uL16 family. In terms of assembly, part of the 50S ribosomal subunit.

Binds 23S rRNA and is also seen to make contacts with the A and possibly P site tRNAs. The protein is Large ribosomal subunit protein uL16 of Lawsonia intracellularis (strain PHE/MN1-00).